Consider the following 855-residue polypeptide: MICAL-like protein 1 (855 aa).

Residues 2 to 108 (AGPRGALLAW…YVSQYYNHFT (107 aa)) enclose the Calponin-homology (CH) domain. 3 disordered regions span residues 110–165 (SGQA…SSAC), 226–253 (GRSG…EDSD), and 269–659 (QASS…HGFP). Low complexity predominate over residues 124-135 (PAAPSPTSTSPA). Residues 163–226 (SACAACGQRV…ERCTRLGLGG (64 aa)) form the LIM zinc-binding domain. A compositionally biased stretch (polar residues) spans 269–278 (QASSEVQPHT). A phosphoserine mark is found at Ser293 and Ser307. A compositionally biased stretch (polar residues) spans 308 to 325 (ESSALTPPTPRPRSSLQQ). Thr313 and Thr316 each carry phosphothreonine. Residues 356 to 367 (LSERMTAPRKDP) are compositionally biased toward basic and acidic residues. The short motif at 423 to 425 (NPF) is the NPF1 element. Residues 425–434 (FEEEEEEEEA) are compositionally biased toward acidic residues. Residues 439-449 (VPSPAPAPPET) show a composition bias toward pro residues. Residues Thr461 and Thr463 each carry the phosphothreonine modification. Ser464, Ser465, Ser478, and Ser480 each carry phosphoserine. The segment covering 499–514 (PSPALSVESLSSESSS) has biased composition (low complexity). Over residues 542 to 554 (PGTSANSVTPSAH) the composition is skewed to polar residues. The span at 555–570 (SSLSSSGELGQPSGEQ) shows a compositional bias: low complexity. At Ser613 the chain carries Phosphoserine. The short motif at 625–627 (NPF) is the NPF2 element. A mediates the interaction with RAB13 and intramolecular interaction with the calponin-homology (CH) domain region spans residues 644-855 (KGAKPVRPPA…AKSKAPTGKS (212 aa)). In terms of domain architecture, bMERB spans 663 to 810 (RKVQADQYIP…EEEEDKMLET (148 aa)). Residues 679–703 (EMDSIERQLDALEHSGVLLEEKLRG) are a coiled coil. Phosphoserine occurs at positions 682 and 732. The necessary and sufficient to associate with tubular recycling endosome membranes, mediate phosphatidic acid-binding and membrane tubulation stretch occupies residues 692–855 (HSGVLLEEKL…AKSKAPTGKS (164 aa)). Residues 794 to 822 (LDEDRQREEEEDKMLETMIKKKDFQREAE) are a coiled coil. Residues 815-826 (KDFQREAESDSK) show a composition bias toward basic and acidic residues. Residues 815-855 (KDFQREAESDSKKKGKFKTMKVLKLLGNKRDAKSKAPTGKS) form a disordered region.

In terms of assembly, homooligomer. Interacts (via NPF1 motif) with EHD1 (via EH domain); the interaction is direct and probably recruits EHD1 to membranes. Interacts with EHD3 (via EH domain). Interacts with RAB35 (GTP-bound form); the interaction is direct and probably recruits MICALL1 to membranes. Interacts with ACAP2; the interaction is indirect through RAB35. Interacts with RAB8A (GTP-bound form); regulates RAB8A association with recycling endosomes. Interacts with RAB13 (GTP-bound form). Interacts with ARF6 (GTP-bound form). Interacts with PACSIN2 (via the SH3 domain). Interacts with DPYSL2.

It is found in the recycling endosome membrane. The protein resides in the late endosome membrane. The protein localises to the cell projection. Its subcellular location is the cilium membrane. It localises to the cytoplasm. It is found in the cytoskeleton. The protein resides in the microtubule organizing center. The protein localises to the centrosome. Its subcellular location is the centriole. In terms of biological role, lipid-binding protein with higher affinity for phosphatidic acid, a lipid enriched in recycling endosome membranes. On endosome membranes, acts as a downstream effector of Rab proteins recruiting cytosolic proteins to regulate membrane tubulation. Involved in a late step of receptor-mediated endocytosis regulating for instance endocytosed-EGF receptor trafficking. Alternatively, regulates slow endocytic recycling of endocytosed proteins back to the plasma membrane. Also involved in cargo protein delivery to the plasma membrane. Plays a role in ciliogenesis coordination, recruits EHD1 to primary cilium where it is anchored to the centriole through interaction with tubulins. May indirectly play a role in neurite outgrowth. The protein is MICAL-like protein 1 (Micall1) of Rattus norvegicus (Rat).